A 403-amino-acid chain; its full sequence is Creatinase (403 aa).

The active site involves His-232.

Belongs to the peptidase M24 family. Creatinase subfamily. As to quaternary structure, homodimer.

It carries out the reaction creatine + H2O = sarcosine + urea. The chain is Creatinase from Flavobacterium sp. (strain U-188).